A 319-amino-acid polypeptide reads, in one-letter code: Methionyl-tRNA formyltransferase (319 aa).

115-118 (SLLP) is a (6S)-5,6,7,8-tetrahydrofolate binding site.

The protein belongs to the Fmt family.

The catalysed reaction is L-methionyl-tRNA(fMet) + (6R)-10-formyltetrahydrofolate = N-formyl-L-methionyl-tRNA(fMet) + (6S)-5,6,7,8-tetrahydrofolate + H(+). In terms of biological role, attaches a formyl group to the free amino group of methionyl-tRNA(fMet). The formyl group appears to play a dual role in the initiator identity of N-formylmethionyl-tRNA by promoting its recognition by IF2 and preventing the misappropriation of this tRNA by the elongation apparatus. This chain is Methionyl-tRNA formyltransferase, found in Lactococcus lactis subsp. lactis (strain IL1403) (Streptococcus lactis).